Reading from the N-terminus, the 263-residue chain is Regulatory protein RecX (263 aa).

Belongs to the RecX family.

It localises to the cytoplasm. Its function is as follows. Modulates RecA activity. This is Regulatory protein RecX from Bacillus pumilus (strain SAFR-032).